A 355-amino-acid polypeptide reads, in one-letter code: Chromosomal protein D1 (355 aa).

N-acetylmethionine is present on Met1. The disordered stretch occupies residues 1-355 (MEEVAVKKRG…NYNDSESVAA (355 aa)). Positions 7–14 (KKRGRPSK) form a DNA-binding region, a.T hook 1. Ser30 carries the post-translational modification Phosphoserine. 2 DNA-binding regions (a.T hook) span residues 34–41 (KKRGRPAK) and 60–67 (KIQNDEDP). Residues 64–77 (DEDPEDEGEEDGDG) are compositionally biased toward acidic residues. A phosphoserine mark is found at Ser80, Ser88, and Ser89. The a.T hook 4 DNA-binding region spans 94–101 (KGRGRPKS). Phosphoserine occurs at positions 107, 109, and 112. Thr115 is subject to Phosphothreonine. Ser118 bears the Phosphoserine mark. The segment covering 119 to 130 (AKKRKAGRPKKH) has biased composition (basic residues). The a.T hook 5 DNA-binding region spans 122–129 (RKAGRPKK). Phosphoserine; by CK2 is present on residues Ser133 and Ser135. Residues 135 to 147 (SENEDDQDEDDDG) are compositionally biased toward acidic residues. Phosphoserine occurs at positions 149, 150, 161, 164, and 170. Positions 155-162 (RPVGRPSA) form a DNA-binding region, a.T hook 6. Residues 174–181 (RGLGRPKK) constitute a DNA-binding region (a.T hook 7). Ser186 carries the post-translational modification Phosphoserine; by CK2. The segment at residues 196–203 (KKRGRPPQ) is a DNA-binding region (a.T hook 8). The residue at position 208 (Ser208) is a Phosphoserine. The a.T hook 9 DNA-binding region spans 219–226 (RPRGRPKA). The span at 237 to 247 (NDDDQDDENSG) shows a compositional bias: acidic residues. 3 positions are modified to phosphoserine: Ser246, Ser252, and Ser253. 2 DNA-binding regions (a.T hook) span residues 262 to 269 (KKRGRPSL) and 281 to 288 (KPRSRPAK). 2 positions are modified to phosphoserine: Ser299 and Ser307. A compositionally biased stretch (basic and acidic residues) spans 307-318 (SKKESNDEDRAV). Position 311 is a phosphoserine; by CK2 (Ser311). At Thr321 the chain carries Phosphothreonine. The residue at position 332 (Ser332) is a Phosphoserine; by CK2. Polar residues predominate over residues 345-355 (DNYNDSESVAA).

Its subcellular location is the nucleus. It is found in the chromosome. This satellite DNA-associated protein is a double-stranded DNA binding protein specific for tracts of pure at DNA. It may play a role in organizing the higher-order structure of euchromatin as well as heterochromatin. The polypeptide is Chromosomal protein D1 (D1) (Drosophila melanogaster (Fruit fly)).